Reading from the N-terminus, the 348-residue chain is Dihydroorotase (348 aa).

Zn(2+) contacts are provided by His17 and His19. Residues 19–21 (HLR) and Asn45 contribute to the substrate site. Positions 103, 140, and 178 each coordinate Zn(2+). Lys103 carries the N6-carboxylysine modification. His140 serves as a coordination point for substrate. Leu223 is a substrate binding site. Position 251 (Asp251) interacts with Zn(2+). Residue Asp251 is part of the active site. His255 and Ala267 together coordinate substrate.

It belongs to the metallo-dependent hydrolases superfamily. DHOase family. Class II DHOase subfamily. In terms of assembly, homodimer. It depends on Zn(2+) as a cofactor.

It catalyses the reaction (S)-dihydroorotate + H2O = N-carbamoyl-L-aspartate + H(+). It participates in pyrimidine metabolism; UMP biosynthesis via de novo pathway; (S)-dihydroorotate from bicarbonate: step 3/3. Catalyzes the reversible cyclization of carbamoyl aspartate to dihydroorotate. This chain is Dihydroorotase, found in Yersinia pseudotuberculosis serotype I (strain IP32953).